The primary structure comprises 1434 residues: Inositol hexakisphosphate and diphosphoinositol-pentakisphosphate kinase 1 (1434 aa).

Position 66 to 67 (66 to 67 (KK)) interacts with substrate. Residues Arg147, Lys200, His207, Arg226, 250–253 (EEFM), and 259–261 (DVK) contribute to the ATP site. 226–227 (RK) provides a ligand contact to substrate. The substrate site is built by Lys261 and Arg275. Residues Ser277, Asp322, and 334-336 (DVN) contribute to the ATP site. A substrate-binding site is contributed by 339 to 342 (SFVK). A polyphosphoinositide-binding domain region spans residues 384–455 (PTTSGTMMEL…VLDITRLLLA (72 aa)). The disordered stretch occupies residues 916–1017 (EGSAPAGCGF…PTEMKQSGLG (102 aa)). Residues Ser941 and Ser984 each carry the phosphoserine modification. Positions 1002–1017 (FSSSRPPTEMKQSGLG) are enriched in polar residues. Ser1034, Ser1070, Ser1142, and Ser1149 each carry phosphoserine. Disordered regions lie at residues 1133–1193 (NHQA…GFSD), 1228–1251 (ESTQ…DTEV), and 1396–1434 (TDNP…EDIS). Positions 1165–1183 (SSGPSSTVSSAGPSSPTTV) are enriched in low complexity. Over residues 1403–1434 (LSEETDLQAQEVSEEIDQEPEVVDELSNEDIS) the composition is skewed to acidic residues.

This sequence belongs to the histidine acid phosphatase family. VIP1 subfamily.

The protein resides in the cytoplasm. It is found in the cytosol. The protein localises to the cell membrane. The enzyme catalyses 1D-myo-inositol hexakisphosphate + ATP = 1-diphospho-1D-myo-inositol 2,3,4,5,6-pentakisphosphate + ADP. It catalyses the reaction 5-diphospho-1D-myo-inositol 1,2,3,4,6-pentakisphosphate + ATP + H(+) = 1,5-bis(diphospho)-1D-myo-inositol 2,3,4,6-tetrakisphosphate + ADP. Functionally, bifunctional inositol kinase that acts in concert with the IP6K kinases IP6K1, IP6K2 and IP6K3 to synthesize the diphosphate group-containing inositol pyrophosphates diphosphoinositol pentakisphosphate, PP-InsP5, and bis-diphosphoinositol tetrakisphosphate, (PP)2-InsP4. PP-InsP5 and (PP)2-InsP4, also respectively called InsP7 and InsP8, regulate a variety of cellular processes, including apoptosis, vesicle trafficking, cytoskeletal dynamics, exocytosis, insulin signaling and neutrophil activation. Phosphorylates inositol hexakisphosphate (InsP6) at position 1 to produce PP-InsP5 which is in turn phosphorylated by IP6Ks to produce (PP)2-InsP4. Alternatively, phosphorylates PP-InsP5 at position 1, produced by IP6Ks from InsP6, to produce (PP)2-InsP4. Activated when cells are exposed to hyperosmotic stress. In Rattus norvegicus (Rat), this protein is Inositol hexakisphosphate and diphosphoinositol-pentakisphosphate kinase 1.